The following is a 304-amino-acid chain: N-carbamoyl-D-amino acid hydrolase (304 aa).

The 272-residue stretch at 5 to 276 (MILAVGQQGP…DEVITAAVDL (272 aa)) folds into the CN hydrolase domain. Residues Glu47, Lys127, and Cys172 contribute to the active site.

In terms of assembly, homotetramer.

The enzyme catalyses an N-carbamoyl-D-amino acid + H2O + 2 H(+) = a D-alpha-amino acid + NH4(+) + CO2. The enzyme catalyzes the hydrolysis of N-carbamoyl-D-amino acids to the corresponding which are useful intermediates in the preparation of beta-lactam antibiotics. Industrial production of beta-lactam antibiotics is now being developed using this enzyme. This Rhizobium radiobacter (Agrobacterium tumefaciens) protein is N-carbamoyl-D-amino acid hydrolase.